The chain runs to 777 residues: Glucocorticoid receptor (777 aa).

Over residues 1-14 the composition is skewed to basic and acidic residues; sequence MDSKESLTPGKEEN. The tract at residues 1–23 is disordered; that stretch reads MDSKESLTPGKEENPSSVLTQER. The modulating stretch occupies residues 1–420; sequence MDSKESLTPG…TATTGPPPKL (420 aa). Position 8 is a phosphothreonine (T8). Residue R23 is modified to Omega-N-methylarginine. Residues S45, S113, S134, and S141 each carry the phosphoserine modification. Residues 130–182 form a disordered region; sequence NRSTSVPENPKSSASSSVSAAPKEKEFPKTHSDVSSEQQNLKGQTGTNGGNVK. Low complexity predominate over residues 134–150; it reads SVPENPKSSASSSVSAA. Residues 151–163 show a composition bias toward basic and acidic residues; it reads PKEKEFPKTHSDV. Over residues 164-174 the composition is skewed to polar residues; it reads SSEQQNLKGQT. S203, S211, and S226 each carry phosphoserine. Residue K258 forms a Glycyl lysine isopeptide (Lys-Gly) (interchain with G-Cter in SUMO2) linkage. Residue S267 is modified to Phosphoserine. Residues K277 and K293 each participate in a glycyl lysine isopeptide (Lys-Gly) (interchain with G-Cter in SUMO); alternate cross-link. Residues K277 and K293 each participate in a glycyl lysine isopeptide (Lys-Gly) (interchain with G-Cter in SUMO2); alternate cross-link. Low complexity predominate over residues 394 to 414; the sequence is SSPSMRPDVSSPPSSSSTATT. The disordered stretch occupies residues 394–415; the sequence is SSPSMRPDVSSPPSSSSTATTG. Phosphoserine is present on S404. A Glycyl lysine isopeptide (Lys-Gly) (interchain with G-Cter in ubiquitin) cross-link involves residue K419. 2 consecutive NR C4-type zinc fingers follow at residues 421–441 and 457–481; these read CLVC…CGSC and CAGR…YRKC. Residues 421-486 constitute a DNA-binding region (nuclear receptor); it reads CLVCSDEASG…RYRKCLQAGM (66 aa). 4 positions are modified to N6-acetyllysine: K480, K492, K494, and K495. Residues 485–777 are interaction with CLOCK; sequence GMNLEARKTK…NIKKLLFHQK (293 aa). A hinge region spans residues 487 to 523; it reads NLEARKTKKKIKGIQQATTGVSQETSENPANKTIVPA. The NR LBD domain occupies 524 to 758; it reads TLPQLTPTLV…FPEMLAEIIT (235 aa). The interaction with CRY1 stretch occupies residues 532–697; sequence LVSLLEVIEP…EIRMTYIKEL (166 aa). K703 participates in a covalent cross-link: Glycyl lysine isopeptide (Lys-Gly) (interchain with G-Cter in SUMO).

Belongs to the nuclear hormone receptor family. NR3 subfamily. As to quaternary structure, heteromultimeric cytoplasmic complex with HSP90AA1, HSPA1A/HSPA1B, and FKBP5 or another immunophilin such as PPID, STIP1, or the immunophilin homolog PPP5C. Upon ligand binding FKBP5 dissociates from the complex and FKBP4 takes its place, thereby linking the complex to dynein and mediating transport to the nucleus, where the complex dissociates. Probably forms a complex composed of chaperones HSP90 and HSP70, co-chaperones CDC37, PPP5C, TSC1 and client protein TSC2, CDK4, AKT, RAF1 and NR3C1; this complex does not contain co-chaperones STIP1/HOP and PTGES3/p23. Directly interacts with UNC45A. Binds to DNA as a homodimer, and as heterodimer with NR3C2 or the retinoid X receptor. Binds STAT5A and STAT5B homodimers and heterodimers. Interacts with NRIP1, POU2F1, POU2F2 and TRIM28. Interacts with several coactivator complexes, including the SMARCA4 complex, CREBBP/EP300, TADA2L (Ada complex) and p160 coactivators such as NCOA2 and NCOA6. Interaction with BAG1 inhibits transactivation. Interacts with HEXIM1 and TGFB1I1. Interacts with NCOA1. Interacts with NCOA3, SMARCA4, SMARCC1, SMARCD1, and SMARCE1. Interacts with CLOCK, CRY1 and CRY2 in a ligand-dependent fashion. Interacts with CIART. Interacts with RWDD3. Interacts with UBE2I/UBC9 and this interaction is enhanced in the presence of RWDD3. Interacts with GRIP1. Interacts with NR4A3 (via nuclear receptor DNA-binding domain), represses transcription activity of NR4A3 on the POMC promoter Nur response element (NurRE). Directly interacts with PNRC2 to attract and form a complex with UPF1 and DCP1A; the interaction leads to rapid mRNA degradation. Interacts with GSK3B. Interacts with FNIP1 and FNIP2. Interacts (via C-terminus) with HNRNPU (via C-terminus). Interacts with MCM3AP. Interacts (via domain NR LBD) with HSP90AA1 and HSP90AB1. In the absence of hormonal ligand, interacts with TACC1. Interacts (via NR LBD domain) with ZNF764 (via KRAB domain); the interaction regulates transcription factor activity of NR3C1 by directing its actions toward certain biologic pathways. Acetylation by CLOCK reduces its binding to glucocorticoid response elements and its transcriptional activity. Post-translationally, increased proteasome-mediated degradation in response to glucocorticoids. In terms of processing, phosphorylated in the absence of hormone; becomes hyperphosphorylated in the presence of glucocorticoid. The Ser-203, Ser-226 and Ser-404-phosphorylated forms are mainly cytoplasmic, and the Ser-211-phosphorylated form is nuclear. Phosphorylation at Ser-211 increases transcriptional activity. Phosphorylation at Ser-203, Ser-226 and Ser-404 decreases signaling capacity. Phosphorylation at Ser-404 may protect from glucocorticoid-induced apoptosis. Phosphorylation at Ser-203 and Ser-211 is not required in regulation of chromosome segregation. May be dephosphorylated by PPP5C, attenuates NR3C1 action. Ubiquitinated by UBR5, leading to its degradation: UBR5 specifically recognizes and binds ligand-bound NR3C1 when it is not associated with coactivators (NCOAs). In presence of NCOAs, the UBR5-degron is not accessible, preventing its ubiquitination and degradation. Post-translationally, sumoylation at Lys-277 and Lys-293 negatively regulates its transcriptional activity. Sumoylation at Lys-703 positively regulates its transcriptional activity in the presence of RWDD3. Sumoylation at Lys-277 and Lys-293 is dispensable whereas sumoylation at Lys-703 is critical for the stimulatory effect of RWDD3 on its transcriptional activity. Heat shock increases sumoylation in a RWWD3-dependent manner.

Its subcellular location is the cytoplasm. It localises to the nucleus. It is found in the mitochondrion. The protein resides in the cytoskeleton. The protein localises to the spindle. Its subcellular location is the microtubule organizing center. It localises to the centrosome. It is found in the chromosome. The protein resides in the nucleoplasm. Receptor for glucocorticoids (GC). Has a dual mode of action: as a transcription factor that binds to glucocorticoid response elements (GRE), both for nuclear and mitochondrial DNA, and as a modulator of other transcription factors. Affects inflammatory responses, cellular proliferation and differentiation in target tissues. Involved in chromatin remodeling. Plays a role in rapid mRNA degradation by binding to the 5' UTR of target mRNAs and interacting with PNRC2 in a ligand-dependent manner which recruits the RNA helicase UPF1 and the mRNA-decapping enzyme DCP1A, leading to RNA decay. Could act as a coactivator for STAT5-dependent transcription upon growth hormone (GH) stimulation and could reveal an essential role of hepatic GR in the control of body growth. Mediates glucocorticoid-induced apoptosis. Promotes accurate chromosome segregation during mitosis. May act as a tumor suppressor. May play a negative role in adipogenesis through the regulation of lipolytic and antilipogenic gene expression. This chain is Glucocorticoid receptor (NR3C1), found in Aotus nancymaae (Ma's night monkey).